The primary structure comprises 601 residues: Somatic embryogenesis receptor kinase 5 (601 aa).

An N-terminal signal peptide occupies residues 1 to 24; it reads MEHGSSRGFIWLILFLDFVSRVTG. Residues 25 to 215 lie on the Extracellular side of the membrane; it reads KTQVDALIAL…SPSPSPSGTS (191 aa). 6 N-linked (GlcNAc...) asparagine glycosylation sites follow: N52, N81, N105, N129, N151, and N184. 5 LRR repeats span residues 71–94, 95–118, 119–141, 143–165, and 166–188; these read SVTRLDLGSANLSGELVPQLAQLP, NLQYLELFNNNITGEIPEELGDLM, ELVSLDLFANNISGPIPSSLGKL, KLRFLRLYNNSLSGEIPRSLTAL, and PLDVLDISNNRLSGDIPVNGSFS. Residues 216–236 form a helical membrane-spanning segment; it reads AAIVVGVAAGAALLFALAWWL. Residues 237 to 601 lie on the Cytoplasmic side of the membrane; it reads RRKLQGHFLD…IENDYPSGPR (365 aa). A Phosphothreonine modification is found at T272. Positions 275–572 constitute a Protein kinase domain; sequence FSKRNVLGKG…KEEMPIHDFN (298 aa). 281–289 contacts ATP; the sequence is LGKGRFGIL. At T298 the chain carries Phosphothreonine. Residue K303 participates in ATP binding. Residues S356 and S359 each carry the phosphoserine modification. D402 functions as the Proton acceptor in the catalytic mechanism. T435, T436, and T441 each carry phosphothreonine. A Phosphotyrosine modification is found at Y449. A Phosphoserine modification is found at S451. T452 is modified (phosphothreonine). 2 positions are modified to phosphoserine: S456 and S506. A Phosphothreonine modification is found at T532.

It belongs to the protein kinase superfamily. Ser/Thr protein kinase family. Interacts with TMK4/BARK1. Autophosphorylated.

Its subcellular location is the cell membrane. It carries out the reaction L-seryl-[protein] + ATP = O-phospho-L-seryl-[protein] + ADP + H(+). The enzyme catalyses L-threonyl-[protein] + ATP = O-phospho-L-threonyl-[protein] + ADP + H(+). In terms of biological role, serine/threonine-kinase of unknown function. The sequence is that of Somatic embryogenesis receptor kinase 5 (SERK5) from Arabidopsis thaliana (Mouse-ear cress).